The primary structure comprises 196 residues: ATP-dependent Clp protease proteolytic subunit (196 aa).

Ser-101 (nucleophile) is an active-site residue. Residue His-126 is part of the active site.

The protein belongs to the peptidase S14 family. As to quaternary structure, component of the chloroplastic Clp protease core complex.

The protein localises to the plastid. The protein resides in the chloroplast stroma. The enzyme catalyses Hydrolysis of proteins to small peptides in the presence of ATP and magnesium. alpha-casein is the usual test substrate. In the absence of ATP, only oligopeptides shorter than five residues are hydrolyzed (such as succinyl-Leu-Tyr-|-NHMec, and Leu-Tyr-Leu-|-Tyr-Trp, in which cleavage of the -Tyr-|-Leu- and -Tyr-|-Trp bonds also occurs).. In terms of biological role, cleaves peptides in various proteins in a process that requires ATP hydrolysis. Has a chymotrypsin-like activity. Plays a major role in the degradation of misfolded proteins. The sequence is that of ATP-dependent Clp protease proteolytic subunit from Populus trichocarpa (Western balsam poplar).